The chain runs to 1071 residues: MPRDGNEGMFTIPGFSQIQFEGFCRFIDQGLMEEFHKFPKIEDTDQEIEFQLFVERYQLVEPLIKERDAVYESLTYSSELYVPAGLIWKTGRDMQEQTIFIGNIPLMNSLGTFIVNGIYRIVINQILQSPGIYYRSELDHNGISVYTSTIISDWGGRSELEIDRKSRIWARVSRKQKISILVLSSAMGSNLREILDNVCYPEIFLSFLNDREKKKIGSKENAILEFYQQFACVGGDPVFSESLCKELQKKFFQQRCELGRIGRRNMNRRLNLDIPQSNTFLLPRDVLAAADHLIGMKFGMGTLDDMNHLKNKRIRSVADLLQDQFGLALVRLENAVRGTICGAIRHKLILTPQNLVSSTSLTTTYESFFGLHPLSQVLDRTNPLTQIVHGRKLSYLGPGGLTGRTASFRIRDIHPSHYGRICPIDTSEGINVGLIGSLAIHARIGHWGSIESPFYEVYQRSKETKMVFLSPSRDEYYTVATGNSLALNRGGIQEEQIVPARYRQEFLTIAWEQIHLRSIFPFQYFSIGASLIPFIEHNDANRALMSSNMQRQAVPLSRSEKCIVGTGLERQAALDSGVSAIAECEGKIIYTDTHKIVLSGHGDTISIPLVMYQRSNKNTCMHQNPQVRRGKCIKKGQILADGAATVGGELALGKNVLVAYMPWEGYNFEDAVLISERLVYEDIYTSFHIRKYEIQTHVTSQGPERITHEIPHLEAHLLRNLDRNGIVALGSWVETGDILVGKLTPQTANESSYAPEDRLLRAILGIQVSTAKETCLKLPIGGRGRVIDVRWIQKKGGSSYNPETIRVYISQKREIKVGDKVAGRHGNKGIISKILSRQDMPYLQDGTPVDMVFNPLGVPSRMNVGQIFECSLGLAGDLLDRHYRIAPFDERYEQEASRKLVFSELYEASKQTANPWVFEPEYPGKSRIFDGRTGDPFEQPVLIGKSYILKLIHQVDDKIHGRSSGHYALVTQQPLRGRAKQGGQRVGEMEVWALEGFGVAHILQEMLTYKSDHIRARQEVLGTTIIGGTIPTPEDAPESFRLLVRELRSLALELNHFLVSEKNFQINRKEA.

The protein belongs to the RNA polymerase beta chain family. In plastids the minimal PEP RNA polymerase catalytic core is composed of four subunits: alpha, beta, beta', and beta''. When a (nuclear-encoded) sigma factor is associated with the core the holoenzyme is formed, which can initiate transcription.

It is found in the plastid. The protein localises to the chloroplast. The enzyme catalyses RNA(n) + a ribonucleoside 5'-triphosphate = RNA(n+1) + diphosphate. In terms of biological role, DNA-dependent RNA polymerase catalyzes the transcription of DNA into RNA using the four ribonucleoside triphosphates as substrates. The protein is DNA-directed RNA polymerase subunit beta of Acorus calamus (Sweet flag).